Reading from the N-terminus, the 353-residue chain is Guanine nucleotide-binding protein subunit alpha (353 aa).

Residues 1-26 (MGCGMSTEEKEGKARNEEIENQLKRD) form a disordered region. Residue glycine 2 is the site of N-myristoyl glycine attachment. Residue cysteine 3 is the site of S-palmitoyl cysteine attachment. The segment covering 7-26 (TEEKEGKARNEEIENQLKRD) has biased composition (basic and acidic residues). Residues 32–353 (NEIKMLLLGA…QENLRLCGLI (322 aa)) enclose the G-alpha domain. Residues 35-48 (KMLLLGAGESGKST) form a G1 motif region. Glutamate 43, serine 44, glycine 45, lysine 46, serine 47, threonine 48, aspartate 150, leucine 175, threonine 181, glycine 203, asparagine 269, lysine 270, aspartate 272, and alanine 325 together coordinate GTP. Serine 47 serves as a coordination point for Mg(2+). The interval 173–181 (DVLRSRVKT) is G2 motif. Threonine 181 lines the Mg(2+) pocket. The G3 motif stretch occupies residues 196–205 (YRMFDVGGQR). A G4 motif region spans residues 265–272 (ILFLNKID). Residues 323 to 328 (TCATDT) are G5 motif.

It belongs to the G-alpha family. G(q) subfamily. In terms of assembly, g proteins are composed of 3 units; alpha, beta and gamma. The alpha chain contains the guanine nucleotide binding site. Mg(2+) is required as a cofactor.

Functionally, guanine nucleotide-binding proteins (G proteins) are involved as modulators or transducers in various transmembrane signaling systems. In Cryphonectria parasitica (Chestnut blight fungus), this protein is Guanine nucleotide-binding protein subunit alpha.